Consider the following 197-residue polypeptide: Peptidyl-tRNA hydrolase (197 aa).

Tyr-23 contributes to the tRNA binding site. The active-site Proton acceptor is His-28. TRNA-binding residues include Phe-73, Asn-75, and Asn-121.

It belongs to the PTH family. Monomer.

It localises to the cytoplasm. It carries out the reaction an N-acyl-L-alpha-aminoacyl-tRNA + H2O = an N-acyl-L-amino acid + a tRNA + H(+). Functionally, hydrolyzes ribosome-free peptidyl-tRNAs (with 1 or more amino acids incorporated), which drop off the ribosome during protein synthesis, or as a result of ribosome stalling. Catalyzes the release of premature peptidyl moieties from peptidyl-tRNA molecules trapped in stalled 50S ribosomal subunits, and thus maintains levels of free tRNAs and 50S ribosomes. This is Peptidyl-tRNA hydrolase from Frankia casuarinae (strain DSM 45818 / CECT 9043 / HFP020203 / CcI3).